We begin with the raw amino-acid sequence, 343 residues long: Putative mediator of RNA polymerase II transcription subunit 4 (343 aa).

Residues 86–125 (LKKLEKHQKIQKEITEIQKEIEEKDKLISTLALNLKDIES) adopt a coiled-coil conformation. Positions 247–343 (ISSPFSIGGN…DEESEEVEWD (97 aa)) are disordered. Positions 271–316 (QQQQQQQQQPQQQLSQSQQSQQQTESELQPIQSILQPPQQLNIDLD) are enriched in low complexity. Residues 317-343 (LNPDLDSSGDDDDEDDDDEESEEVEWD) show a composition bias toward acidic residues.

It belongs to the Mediator complex subunit 4 family. Component of the Mediator complex.

It localises to the nucleus. Functionally, component of the Mediator complex, a coactivator involved in the regulated transcription of nearly all RNA polymerase II-dependent genes. Mediator functions as a bridge to convey information from gene-specific regulatory proteins to the basal RNA polymerase II transcription machinery. Mediator is recruited to promoters by direct interactions with regulatory proteins and serves as a scaffold for the assembly of a functional preinitiation complex with RNA polymerase II and the general transcription factors. This chain is Putative mediator of RNA polymerase II transcription subunit 4 (med4), found in Dictyostelium discoideum (Social amoeba).